We begin with the raw amino-acid sequence, 1625 residues long: E3 ubiquitin-protein ligase KEG (1625 aa).

The RING-type zinc finger occupies 10–56; it reads CSVCHTRYNEDERVPLLLQCGHGFCKDCLSKMFSTSSDTTLTCPRCR. The span at 91–106 shows a compositional bias: acidic residues; the sequence is YTDDEDDDDEEDGSDE. The disordered stretch occupies residues 91 to 110; sequence YTDDEDDDDEEDGSDEDGAR. One can recognise a Protein kinase domain in the interval 141–427; sequence RQIGEESSSG…TFNAMLATFL (287 aa). ATP-binding positions include 147–155 and lysine 176; that span reads SSSGGFGGV. ANK repeat units lie at residues 467–496, 510–540, 544–573, 579–608, 612–641, 647–676, 685–720, 725–754, 758–787, 791–826, and 832–863; these read DNPN…AGGG, DGQS…NVDI, DGDP…NVRS, SGPS…DPNA, EGET…SRSM, KCLT…PEEI, PVGT…DPTA, HGRT…NANI, HNTI…DCNI, EGDN…AVDV, and KTVR…HLSP.

In terms of assembly, interacts with ABI5 and EDR1. Post-translationally, autophosphotylated and autoubiquitinated in vitro. In terms of processing, phosphorylation enhances self-ubiquitination. Autoubiquitinated in response to abscisic acid (ABA) and subsequently targeted to proteolysis. Expressed in all tissues of young seedlings. In flowering plants, only detected in the youngest part of the stem, anthers and the receptacle of immature siliques. Not found in mature leave, older parts of the stem, flower parts other than anthers or mature siliques.

It localises to the golgi apparatus. Its subcellular location is the trans-Golgi network. The protein localises to the early endosome. The catalysed reaction is L-seryl-[protein] + ATP = O-phospho-L-seryl-[protein] + ADP + H(+). It catalyses the reaction L-threonyl-[protein] + ATP = O-phospho-L-threonyl-[protein] + ADP + H(+). It carries out the reaction S-ubiquitinyl-[E2 ubiquitin-conjugating enzyme]-L-cysteine + [acceptor protein]-L-lysine = [E2 ubiquitin-conjugating enzyme]-L-cysteine + N(6)-ubiquitinyl-[acceptor protein]-L-lysine.. It functions in the pathway protein modification; protein ubiquitination. Functionally, mediates E2-dependent protein ubiquitination. Acts as a negative regulator of abscisic acid signaling. Required for ABI5 degradation, by mediating its ubiquitination. Together with EDR1, may regulate endocytic trafficking and/or the formation of signaling complexes on trans-Golgi network (TGN)/ early endosome (EE) vesicles during stress responses. The protein is E3 ubiquitin-protein ligase KEG (KEG) of Arabidopsis thaliana (Mouse-ear cress).